A 162-amino-acid chain; its full sequence is MVEQKDKYRPCVGIMLFNRQGHAFIGKRFESDSYWQMPQGGVDDGEELEQAALRELLEEVGTNKVKVITKSKDWIYYNLPEEVIPICWNGKYSGQKQRWFLMKFCGEDEDIDINYTGHPEFKEWRWQGIDSLVASAISFKKEVYKTVIEEFSSIIKASTISS.

In terms of domain architecture, Nudix hydrolase spans 7–149; sequence KYRPCVGIML…KKEVYKTVIE (143 aa). Residues 40–61 carry the Nudix box motif; sequence GGVDDGEELEQAALRELLEEVG.

Belongs to the Nudix hydrolase family. RppH subfamily. A divalent metal cation is required as a cofactor.

Its function is as follows. Accelerates the degradation of transcripts by removing pyrophosphate from the 5'-end of triphosphorylated RNA, leading to a more labile monophosphorylated state that can stimulate subsequent ribonuclease cleavage. The protein is RNA pyrophosphohydrolase of Wolbachia pipientis wMel.